Here is a 266-residue protein sequence, read N- to C-terminus: MKKMSEIIATLKKDYIYNLMIKDKRQDGRGFKDFRELKLETNVISKAEGSAKVTLGNTQVLVGVKLQTGTPFPDSQDEGVIITNLELNPIASPEFEPGPPREDAIEMARVVDRGIRESGAIDIKKLCITVGESVWIVFIDVHILNNDGNIIDASCLAAIAALMTTMVPNEQQGLGENVPLAMKEMPVGITLAKIGSKLMVDPSLDEEAVCETKLTIVSSSDGSVAGMQKMGPVPLTEAELFEAIDMAIEKAAEIRGLYLEGLAKSE.

It belongs to the RNase PH family. Rrp42 subfamily. Component of the archaeal exosome complex. Forms a hexameric ring-like arrangement composed of 3 Rrp41-Rrp42 heterodimers. The hexameric ring associates with a trimer of Rrp4 and/or Csl4 subunits.

The protein resides in the cytoplasm. In terms of biological role, non-catalytic component of the exosome, which is a complex involved in RNA degradation. Contributes to the structuring of the Rrp41 active site. This Methanosarcina mazei (strain ATCC BAA-159 / DSM 3647 / Goe1 / Go1 / JCM 11833 / OCM 88) (Methanosarcina frisia) protein is Exosome complex component Rrp42.